The chain runs to 151 residues: Epigen (151 aa).

The first 18 residues, 1 to 18 (MAFGMLIYILLKAMGALS), serve as a signal peptide directing secretion. At 19-108 (EEAALTASSL…NSYAHNSYER (90 aa)) the chain is on the extracellular side. Asn-39 carries N-linked (GlcNAc...) asparagine glycosylation. The EGF-like domain maps to 54–94 (LMQTCLEEHHSYCINGLCAFHSELRKPICKCLAGYNGERCE). 3 disulfide bridges follow: Cys-58-Cys-71, Cys-66-Cys-82, and Cys-84-Cys-93. The chain crosses the membrane as a helical span at residues 109 to 129 (YIAVGIGIGILTSGILAIIYC). At 130–151 (YVRKRCRKLKSPYKVCMGETAL) the chain is on the cytoplasmic side.

The protein resides in the membrane. Functionally, promotes the growth of epithelial cells. In Gallus gallus (Chicken), this protein is Epigen (EPGN).